The following is a 427-amino-acid chain: Glutamate-1-semialdehyde 2,1-aminomutase (427 aa).

An N6-(pyridoxal phosphate)lysine modification is found at K265.

Belongs to the class-III pyridoxal-phosphate-dependent aminotransferase family. HemL subfamily. In terms of assembly, homodimer. Pyridoxal 5'-phosphate is required as a cofactor.

Its subcellular location is the cytoplasm. The enzyme catalyses (S)-4-amino-5-oxopentanoate = 5-aminolevulinate. It participates in porphyrin-containing compound metabolism; protoporphyrin-IX biosynthesis; 5-aminolevulinate from L-glutamyl-tRNA(Glu): step 2/2. The polypeptide is Glutamate-1-semialdehyde 2,1-aminomutase (Stutzerimonas stutzeri (strain A1501) (Pseudomonas stutzeri)).